A 426-amino-acid polypeptide reads, in one-letter code: mRNA cap guanine-N(7) methyltransferase (426 aa).

The mRNA cap 0 methyltransferase domain maps to 138 to 421; sequence SPIIKLRNFN…FYTTFAFRKV (284 aa). 147–148 contacts mRNA; sequence NN. Residues K151, A169, D191, D220, Q246, and Y251 each contribute to the S-adenosyl-L-methionine site.

This sequence belongs to the class I-like SAM-binding methyltransferase superfamily. mRNA cap 0 methyltransferase family.

It localises to the nucleus. The catalysed reaction is a 5'-end (5'-triphosphoguanosine)-ribonucleoside in mRNA + S-adenosyl-L-methionine = a 5'-end (N(7)-methyl 5'-triphosphoguanosine)-ribonucleoside in mRNA + S-adenosyl-L-homocysteine. In terms of biological role, responsible for methylating the 5'-cap structure of mRNAs. The sequence is that of mRNA cap guanine-N(7) methyltransferase (ABD1) from Kluyveromyces lactis (strain ATCC 8585 / CBS 2359 / DSM 70799 / NBRC 1267 / NRRL Y-1140 / WM37) (Yeast).